Consider the following 164-residue polypeptide: Cytochrome c oxidase subunit 4, mitochondrial (164 aa).

The transit peptide at 1–33 directs the protein to the mitochondrion; sequence MFMNSMLRVSRQRAAVRSTVSLYRGFVSASIRR. Residues Cys120, His128, Cys143, and Cys146 each contribute to the Zn(2+) site.

It belongs to the cytochrome c oxidase subunit 5B family. Component of the cytochrome c oxidase (complex IV, CIV), a multisubunit enzyme composed of a catalytic core of 3 subunits and several supernumerary subunits. The complex exists as a monomer or a dimer and forms supercomplexes (SCs) in the inner mitochondrial membrane with ubiquinol-cytochrome c oxidoreductase (cytochrome b-c1 complex, complex III, CIII).

Its subcellular location is the mitochondrion inner membrane. Its pathway is energy metabolism; oxidative phosphorylation. Component of the cytochrome c oxidase, the last enzyme in the mitochondrial electron transport chain which drives oxidative phosphorylation. The respiratory chain contains 3 multisubunit complexes succinate dehydrogenase (complex II, CII), ubiquinol-cytochrome c oxidoreductase (cytochrome b-c1 complex, complex III, CIII) and cytochrome c oxidase (complex IV, CIV), that cooperate to transfer electrons derived from NADH and succinate to molecular oxygen, creating an electrochemical gradient over the inner membrane that drives transmembrane transport and the ATP synthase. Cytochrome c oxidase is the component of the respiratory chain that catalyzes the reduction of oxygen to water. Electrons originating from reduced cytochrome c in the intermembrane space (IMS) are transferred via the dinuclear copper A center (CU(A)) of subunit 2 and heme A of subunit 1 to the active site in subunit 1, a binuclear center (BNC) formed by heme A3 and copper B (CU(B)). The BNC reduces molecular oxygen to 2 water molecules using 4 electrons from cytochrome c in the IMS and 4 protons from the mitochondrial matrix. This is Cytochrome c oxidase subunit 4, mitochondrial (cox4) from Schizosaccharomyces pombe (strain 972 / ATCC 24843) (Fission yeast).